The following is a 425-amino-acid chain: Nucleoporin nup45 (425 aa).

The span at 1-10 (MFGLNKTPSF) shows a compositional bias: polar residues. Residues 1 to 207 (MFGLNKTPSF…GFGLSNNTQT (207 aa)) are disordered. Over residues 11-27 (GSTGTQNQNTGTSAGTG) the composition is skewed to low complexity. Over residues 28 to 45 (LFSSNTFGNNTQANTPAS) the composition is skewed to polar residues. The span at 47–56 (GFGGVTGGAF) shows a compositional bias: gly residues. Polar residues predominate over residues 72 to 89 (PNATSTTPGLNLFGQNPQ). Low complexity-rich tracts occupy residues 112–126 (NQNQTQAQPAQAAPT) and 135–150 (QNQTQSQTQPAQANTS). Polar residues predominate over residues 167-207 (NRPNTSTFGQFSTQPASAGLFGQSTQPSGSTGFGLSNNTQT). 2 positions are modified to phosphoserine: Ser289 and Ser290.

It localises to the cytoplasm. The protein localises to the nucleus. It is found in the nuclear pore complex. Functions as a component of the nuclear pore complex (NPC). NPC components, collectively referred to as nucleoporins (NUPs), can play the role of both NPC structural components and of docking or interaction partners for transiently associated nuclear transport factors. Active directional transport is assured by both, a Phe-Gly (FG) repeat affinity gradient for these transport factors across the NPC and a transport cofactor concentration gradient across the nuclear envelope. This is Nucleoporin nup45 (nup45) from Schizosaccharomyces pombe (strain 972 / ATCC 24843) (Fission yeast).